Here is a 319-residue protein sequence, read N- to C-terminus: MGKAAKKKYSGISTGKEVPSEQHMNTVFKFNTDLGQHILKNPLVAQGIVDKAQIKPSDIVLEVGPGTGNLTVRILEQARKVVAVEFDPRMAAELTKRVHGTPAEKKLEIMLGDFMKTELPYFDICISNTPYQISSPLVFKLINQPRPPRVSILMFQREFAMRLLARPGDSLYCRLSANVQMWANVTHVMKVGRNNFRPPPQVESSVVRIEIKTPRPPVDFNEWDGLLRIVFVRKNRTISAGFKSTAVLEIMEKNYKAYLATTNDAMVDDAKGSLAEQVKQKIETVLAETGLSDKRAGKCDQTDFLKLLYAFHQVGLHFS.

S-adenosyl-L-methionine contacts are provided by histidine 37, leucine 39, glycine 64, glutamate 85, aspartate 113, and asparagine 128.

The protein belongs to the class I-like SAM-binding methyltransferase superfamily. rRNA adenine N(6)-methyltransferase family.

It carries out the reaction adenosine(1779)/adenosine(1780) in 18S rRNA + 4 S-adenosyl-L-methionine = N(6)-dimethyladenosine(1779)/N(6)-dimethyladenosine(1780) in 18S rRNA + 4 S-adenosyl-L-homocysteine + 4 H(+). Functionally, specifically dimethylates two adjacent adenosines in the loop of a conserved hairpin near the 3'-end of 18S rRNA in the 40S particle. This is Dimethyladenosine transferase (DIM1) from Eremothecium gossypii (strain ATCC 10895 / CBS 109.51 / FGSC 9923 / NRRL Y-1056) (Yeast).